We begin with the raw amino-acid sequence, 128 residues long: Probable 4-amino-4-deoxy-L-arabinose-phosphoundecaprenol flippase subunit ArnF (128 aa).

Over 1–2 the chain is Cytoplasmic; the sequence is MG. Residues 3–23 traverse the membrane as a helical segment; sequence LMWGLFSVIIASAAQLSLGFA. Residues 24–32 lie on the Periplasmic side of the membrane; that stretch reads ASHLPPMTH. Residues 33–53 traverse the membrane as a helical segment; that stretch reads LWDFIAALLAFGLDARILLLG. Residues 54-76 lie on the Cytoplasmic side of the membrane; that stretch reads LQGYLLSVFCWYKTLHKLALSKA. A helical membrane pass occupies residues 77-97; the sequence is YALLSMSYVLVWIASMVLPGW. At 98–100 the chain is on the periplasmic side; the sequence is EGT. Residues 101-121 form a helical membrane-spanning segment; that stretch reads FSLKALLGVACIMSGLMLIFL. The Cytoplasmic segment spans residues 122–128; that stretch reads PTTKQRY.

This sequence belongs to the ArnF family. As to quaternary structure, heterodimer of ArnE and ArnF.

It localises to the cell inner membrane. Its pathway is bacterial outer membrane biogenesis; lipopolysaccharide biosynthesis. Its function is as follows. Translocates 4-amino-4-deoxy-L-arabinose-phosphoundecaprenol (alpha-L-Ara4N-phosphoundecaprenol) from the cytoplasmic to the periplasmic side of the inner membrane. The polypeptide is Probable 4-amino-4-deoxy-L-arabinose-phosphoundecaprenol flippase subunit ArnF (Escherichia coli O7:K1 (strain IAI39 / ExPEC)).